Consider the following 688-residue polypeptide: Potassium-transporting ATPase ATP-binding subunit (688 aa).

The next 4 helical transmembrane spans lie at 35–55, 62–82, 219–239, and 260–280; these read VMFV…QALG, AGFI…ANFA, IALT…IVTL, and VLIA…LSAI. The active-site 4-aspartylphosphate intermediate is the aspartate 313. ATP is bound by residues aspartate 350, glutamate 354, 383-390, and lysine 401; that span reads FSAHTRMS. Residues aspartate 524 and aspartate 528 each coordinate Mg(2+). The next 3 membrane-spanning stretches (helical) occupy residues 594-614, 622-642, and 668-688; these read FAII…LNVM, AILS…PLAL, and VIVP…VGLA.

It belongs to the cation transport ATPase (P-type) (TC 3.A.3) family. Type IA subfamily. The system is composed of three essential subunits: KdpA, KdpB and KdpC.

Its subcellular location is the cell inner membrane. It catalyses the reaction K(+)(out) + ATP + H2O = K(+)(in) + ADP + phosphate + H(+). Functionally, part of the high-affinity ATP-driven potassium transport (or Kdp) system, which catalyzes the hydrolysis of ATP coupled with the electrogenic transport of potassium into the cytoplasm. This subunit is responsible for energy coupling to the transport system and for the release of the potassium ions to the cytoplasm. In Dechloromonas aromatica (strain RCB), this protein is Potassium-transporting ATPase ATP-binding subunit.